The sequence spans 256 residues: Ribosomal RNA small subunit methyltransferase A (256 aa).

S-adenosyl-L-methionine is bound by residues N12, L14, G39, E60, D85, and N103.

Belongs to the class I-like SAM-binding methyltransferase superfamily. rRNA adenine N(6)-methyltransferase family. RsmA subfamily.

The protein resides in the cytoplasm. The catalysed reaction is adenosine(1518)/adenosine(1519) in 16S rRNA + 4 S-adenosyl-L-methionine = N(6)-dimethyladenosine(1518)/N(6)-dimethyladenosine(1519) in 16S rRNA + 4 S-adenosyl-L-homocysteine + 4 H(+). Its function is as follows. Specifically dimethylates two adjacent adenosines (A1518 and A1519) in the loop of a conserved hairpin near the 3'-end of 16S rRNA in the 30S particle. May play a critical role in biogenesis of 30S subunits. The sequence is that of Ribosomal RNA small subunit methyltransferase A from Legionella pneumophila subsp. pneumophila (strain Philadelphia 1 / ATCC 33152 / DSM 7513).